A 154-amino-acid chain; its full sequence is Low molecular weight protein-tyrosine-phosphatase PtpA (154 aa).

Cys-8 serves as the catalytic Nucleophile. The active site involves Arg-14. The Proton donor role is filled by Asp-120.

The protein belongs to the low molecular weight phosphotyrosine protein phosphatase family.

It catalyses the reaction O-phospho-L-tyrosyl-[protein] + H2O = L-tyrosyl-[protein] + phosphate. Its function is as follows. Dephosphorylates the phosphotyrosine-containing proteins. This chain is Low molecular weight protein-tyrosine-phosphatase PtpA (ptpA), found in Staphylococcus haemolyticus (strain JCSC1435).